The primary structure comprises 1410 residues: Slit homolog 1 protein (1410 aa).

Residues 1–16 form the signal peptide; that stretch reads MLICFIFILLIPESAT. The LRRNT 1 domain maps to 17 to 43; the sequence is CPAECVCVDRTVSCVGQQLTEVPQNIP. 20 LRR repeats span residues 22-42, 43-66, 67-90, 91-114, 116-138, 140-162, 163-186, 219-242, 286-309, 310-333, 335-357, 358-381, 383-405, 407-430, 442-465, 489-510, 511-535, 536-559, 561-583, and 585-607; these read VCVDRTVSCVGQQLTEVPQNI, PNDTIRLDLQDNEITKIGPNDFSS, LMNLKALQLMDNQIVTIHNQSFSS, LVFLQKLRLSRNRIRHLPDNVFQN, LKLTHLDLSENDITVVSDAQLQG, EFLEVLNLDKNHIFCLENNVISS, WVSLEVLTLNGNRLTTFEEPSNAR, TVCATPLNLQGSSIEILQDKFMTC, PPSTTEIRLEQNQISSIPSHSFKN, LKNLTRLDLSKNIITEIQPKAFLG, HNLHTLVLYGNNITDLKSDTFEG, LGSLQLLLLNANQLTCIRRGTFDH, PKLSMLSLYDNDIKSISEVTFQN, TSLSTLHLAKNPLICDCNLQWLAQ, ARCEQPKRLRKKKFATLPPNKFKC, CDCYGTTVDCNKRGLNTIPTSI, PRFATQLLLSGNNISTVDLNSNIHV, LENLEVLDLSNNHITFINDKSFEK, SKLRELRLNDNKLHHFSSMVLDE, and SNLEILDLSGNNIQCFSSIFFNK. Residues 195-243 form the LRRCT 1 domain; that stretch reads NPWNCDCRLRWMRKWLEKAEGQNKTVCATPLNLQGSSIEILQDKFMTCS. Residues 259–286 form the LRRNT 2 domain; sequence ICPLPCTCTGTTVDCRDSGLTYVPTNLP. In terms of domain architecture, LRRCT 2 spans 417-466; that stretch reads NPLICDCNLQWLAQINLQKNIETSGARCEQPKRLRKKKFATLPPNKFKCK. In terms of domain architecture, LRRNT 3 spans 484–511; that stretch reads ICPTQCDCYGTTVDCNKRGLNTIPTSIP. The 53-residue stretch at 619-671 folds into the LRRCT 3 domain; the sequence is NDLLCDCRILPLMSWLRSNSSHSIDIPPCQQFQYSDNESDKQRCAAFPEETCS. Positions 677–703 constitute an LRRNT 4 domain; it reads CPPKCSCLDRVVRCSNKNLTSFPSRIP. LRR repeat units lie at residues 681–703, 704–726, 727–750, 752–774, 775–798, and 800–823; these read CSCLDRVVRCSNKNLTSFPSRIP, FDTTELYLDANYINEIPAHDLNR, LYSLTKLDLSHNRLISLENNTFSN, TRLSTLIISYNKLRCLQPLAFNG, LNALRILSLHGNDISFLPQSAFSN, and TSITHIAVGSNSLYCDCNMAWFSK. Residues 810-859 form the LRRCT 4 domain; it reads NSLYCDCNMAWFSKWIKSKFIEAGIARCEYPNTVSNQLLLTAQPYQFTCD. 2 EGF-like domains span residues 871 to 906 and 908 to 945; these read DLCLNSPCKNNAICETTSSRKYTCNCTPGFYGVHCE and QIDACYGSPCLNNATCKVAQAGRFNCYCNKGFEGDYCE. 18 disulfide bridges follow: cysteine 873-cysteine 884, cysteine 878-cysteine 894, cysteine 896-cysteine 905, cysteine 912-cysteine 923, cysteine 917-cysteine 933, cysteine 935-cysteine 944, cysteine 951-cysteine 962, cysteine 956-cysteine 971, cysteine 973-cysteine 982, cysteine 989-cysteine 1002, cysteine 996-cysteine 1011, cysteine 1013-cysteine 1022, cysteine 1029-cysteine 1040, cysteine 1034-cysteine 1049, cysteine 1051-cysteine 1060, cysteine 1076-cysteine 1086, cysteine 1081-cysteine 1097, and cysteine 1099-cysteine 1108. Residues 947-983 form the EGF-like 1; calcium-binding domain; it reads NIDDCVNSKCENGGKCVDLINSYRCDCPMEYEGKHCE. One can recognise an EGF-like 3 domain in the interval 985 to 1023; that stretch reads KLEYCTKKLNPCENNGKCIPINGSYSCMCSPGFTGNNCE. An EGF-like 2; calcium-binding domain is found at 1025-1061; the sequence is NIDDCKNVECQNGGSCVDGILSYDCLCRPGYAGQYCE. Positions 1072-1109 constitute an EGF-like 4 domain; sequence KTDACQQSACGQGECVASQNSSDFTCKCHEGFSGPSCD. Residues 1112–1285 form the Laminin G-like domain; it reads MSVGFKNPGA…LENVNTEQSC (174 aa). One copy of the LRR 27 repeat lies at 1197-1221; the sequence is TSERKCFLQIDKNPVQIVENSGKSD. 8 disulfides stabilise this stretch: cysteine 1259-cysteine 1285, cysteine 1292-cysteine 1302, cysteine 1297-cysteine 1314, cysteine 1316-cysteine 1325, cysteine 1332-cysteine 1368, cysteine 1346-cysteine 1382, cysteine 1357-cysteine 1398, and cysteine 1361-cysteine 1400. The region spanning 1288–1326 is the EGF-like 5 domain; the sequence is TVNFCAGIDCGNGKCTNNALSPKGYMCQCDSHFSGEHCD. The 75-residue stretch at 1332–1406 folds into the CTCK domain; it reads CDKQKFRRHH…QCQCEPTKSV (75 aa).

Interacts with eva-1.

The protein localises to the secreted. Functions as a ligand for sax-3 receptor during larval development. Acts via the sax-3/Robo receptor to direct ventral axon guidance and guidance at the midline during embryonic development. The protein is Slit homolog 1 protein (slt-1) of Caenorhabditis elegans.